Consider the following 339-residue polypeptide: MMTTEDFKKSTANLKKVVPLMMKHHVAATPVNYALWYTYVDQAIPQLNAEMDSVLKNFGLCPPASGEHLYQQYIATKAETNINQLRANVEVLLGEISSSMSDTLSDTSSFANVIDKSFKDLERVEQDNLSIEEVMTVIRRLVSDSKDIRHSTNFLNNQLNAATLEISRLKEQLAKVQKDALFDSLSGLYNRRAFDGDMFTLIHAGQQVSLIMLDIDHFKALNDNYGHLFGDQIIRAIAKRLQSLCRDGVTAYRYGGEEFALIAPHKSLRIARQFAESVRRSIEKLTVKDRRSGQSVGSITASFGVVEKIEGDSLESLIGRADGLLYEAKNLGRNRVMPL.

The 134-residue stretch at 206-339 (QQVSLIMLDI…NLGRNRVMPL (134 aa)) folds into the GGDEF domain. Position 214 (Asp-214) interacts with Mg(2+). The substrate site is built by Asn-222 and Asp-231. Residue Glu-257 coordinates Mg(2+). Glu-257 (proton acceptor) is an active-site residue.

It depends on Mg(2+) as a cofactor.

The enzyme catalyses 2 GTP = 3',3'-c-di-GMP + 2 diphosphate. It functions in the pathway purine metabolism; 3',5'-cyclic di-GMP biosynthesis. In terms of biological role, diguanylate cyclase (DGC) that catalyzes the synthesis of cyclic diguanylate (c-di-GMP) via the condensation of 2 GTP molecules. Is involved in the modulation of intracellular c-di-GMP levels. Cyclic-di-GMP is a second messenger which positively regulates biofilm formation and negatively regulates virulence in V.cholerae, and is proposed to play an important role in the transition from persistence in the environment to survival in the host. Overexpression of vdcA results in increased biofilm formation, and reduced motility and virulence. The sequence is that of Diguanylate cyclase VdcA (vdcA) from Vibrio cholerae serotype O1 (strain ATCC 39315 / El Tor Inaba N16961).